Here is a 470-residue protein sequence, read N- to C-terminus: Zinc finger and BTB domain-containing protein 8A.1-A (470 aa).

The 69-residue stretch at 24 to 92 (CDCHIIVEGQ…VYSGKLPLSG (69 aa)) folds into the BTB domain. The tract at residues 260–280 (EDEDAASHSWPESPQQESLDQ) is disordered. Over residues 269–278 (WPESPQQESL) the composition is skewed to polar residues. C2H2-type zinc fingers lie at residues 316 to 338 (FKCP…LRCH) and 344 to 367 (YPCE…QTIH). Positions 439–450 (GRKENGSERAES) are enriched in basic and acidic residues. A disordered region spans residues 439 to 470 (GRKENGSERAESDLAIQEVVDSEDDELKEKQD).

The protein resides in the nucleus. In terms of biological role, may be involved in transcriptional regulation. This is Zinc finger and BTB domain-containing protein 8A.1-A (zbtb8a.1-a) from Xenopus laevis (African clawed frog).